Consider the following 661-residue polypeptide: MVEHYPFKLNSEFDPQGDQPQAIEKIVKGVKEGKRHQTLLGATGTGKTFTMSNVIKEVGKPTLIIAHNKTLAGQLYSEFKEFFPENRVEYFVSYYDYYQPEAYVPSTDTFIEKDASINDEIDQLRHSATSALFERDDVIIIASVSCIYGLGNPEEYKDLVVSVRVGMEMDRSELLRKLVDVQYSRNDIDFQRGTFRVRGDVVEIFPASREEMCIRVEFFGDEIDRIREVNYLTGEVIREREHFAIFPASHFVTREEKMKIAIERIEKELEERLKELKDENKLLEAQRLEQRTNYDLEMMREMGFCSGIENYSVHLTLRPLGSTPYTLLDYFGDDWLVMIDESHVTLPQIRGMFNGDRARKQVLVDHGFRLPSAMDNRPLKFEEFEQKTNQLVYVSATPGPYEIEHTDEMIEQIIRPTGLLDPKIDVRPTKNQIDDLLSEIQERIDRDERVLVTTLTKKMSEDLTTYMKEAGIKVNYLHSEIKTLERIEIIRDLRMGTYDVVVGINLLREGIDIPEVSLVVILDADKEGFLRSNRSLIQTIGRAARNEKGEVIMYADKITDSMQYALDETQRRRDIQTAHNEKYGITPKTINKKIHDVISATVDNDETNEKQQTELPKKMTKKERQKTIENIEKEMKKAAKDLDFEKATELRDMLFELKSEG.

A Helicase ATP-binding domain is found at 28–414 (KGVKEGKRHQ…HTDEMIEQII (387 aa)). ATP is bound at residue 41–48 (GATGTGKT). A Beta-hairpin motif is present at residues 94 to 117 (YYDYYQPEAYVPSTDTFIEKDASI). One can recognise a Helicase C-terminal domain in the interval 432–598 (QIDDLLSEIQ…TINKKIHDVI (167 aa)). The disordered stretch occupies residues 604-625 (NDETNEKQQTELPKKMTKKERQ). The span at 607-617 (TNEKQQTELPK) shows a compositional bias: basic and acidic residues. The UVR domain occupies 625 to 660 (QKTIENIEKEMKKAAKDLDFEKATELRDMLFELKSE).

Belongs to the UvrB family. In terms of assembly, forms a heterotetramer with UvrA during the search for lesions. Interacts with UvrC in an incision complex.

The protein localises to the cytoplasm. Functionally, the UvrABC repair system catalyzes the recognition and processing of DNA lesions. A damage recognition complex composed of 2 UvrA and 2 UvrB subunits scans DNA for abnormalities. Upon binding of the UvrA(2)B(2) complex to a putative damaged site, the DNA wraps around one UvrB monomer. DNA wrap is dependent on ATP binding by UvrB and probably causes local melting of the DNA helix, facilitating insertion of UvrB beta-hairpin between the DNA strands. Then UvrB probes one DNA strand for the presence of a lesion. If a lesion is found the UvrA subunits dissociate and the UvrB-DNA preincision complex is formed. This complex is subsequently bound by UvrC and the second UvrB is released. If no lesion is found, the DNA wraps around the other UvrB subunit that will check the other stand for damage. The polypeptide is UvrABC system protein B (Staphylococcus haemolyticus (strain JCSC1435)).